The chain runs to 417 residues: Serine hydroxymethyltransferase (417 aa).

(6S)-5,6,7,8-tetrahydrofolate contacts are provided by residues Leu-117 and 121–123 (GHL). Residue Lys-226 is modified to N6-(pyridoxal phosphate)lysine.

This sequence belongs to the SHMT family. Homodimer. It depends on pyridoxal 5'-phosphate as a cofactor.

Its subcellular location is the cytoplasm. The enzyme catalyses (6R)-5,10-methylene-5,6,7,8-tetrahydrofolate + glycine + H2O = (6S)-5,6,7,8-tetrahydrofolate + L-serine. It participates in one-carbon metabolism; tetrahydrofolate interconversion. The protein operates within amino-acid biosynthesis; glycine biosynthesis; glycine from L-serine: step 1/1. Catalyzes the reversible interconversion of serine and glycine with tetrahydrofolate (THF) serving as the one-carbon carrier. This reaction serves as the major source of one-carbon groups required for the biosynthesis of purines, thymidylate, methionine, and other important biomolecules. Also exhibits THF-independent aldolase activity toward beta-hydroxyamino acids, producing glycine and aldehydes, via a retro-aldol mechanism. The chain is Serine hydroxymethyltransferase from Syntrophus aciditrophicus (strain SB).